The primary structure comprises 284 residues: MHIFGKILGAFFGFLFGGPFGAIFGIFLGHQFDKARRLNQAGFQSGTFGAGPSQAERQEEFFKSAFSVMGHVAKAKGQVTKEEIQLATIMMDRMNLTLEQKRAAQDAFRDGKESDFPLEQVLERVKIATGGRFDLLQFFLELQVSSAFADGDVHPSERQVLHRIARGLGFSSEQLERRLRMQEAAFRFQQGGGFGGSQQQSHSGQQWQQPSSRHQLADAYEVLGVSESASAQEVKRAYRKLMNEHHPDKLMAKGLPPEMMNVAKEKSQQIQHAYELIRKEKGIK.

At 1–6 the chain is on the periplasmic side; the sequence is MHIFGK. A helical membrane pass occupies residues 7–30; the sequence is ILGAFFGFLFGGPFGAIFGIFLGH. Over 31 to 284 the chain is Cytoplasmic; sequence QFDKARRLNQ…ELIRKEKGIK (254 aa). The interval 190–211 is disordered; it reads QGGGFGGSQQQSHSGQQWQQPS. Residues 197-211 show a composition bias toward low complexity; that stretch reads SQQQSHSGQQWQQPS. Positions 218–284 constitute a J domain; the sequence is DAYEVLGVSE…ELIRKEKGIK (67 aa).

In terms of assembly, homodimer.

The protein resides in the cell inner membrane. In terms of biological role, regulatory DnaK co-chaperone. Direct interaction between DnaK and DjlA is needed for the induction of the wcaABCDE operon, involved in the synthesis of a colanic acid polysaccharide capsule, possibly through activation of the RcsB/RcsC phosphotransfer signaling pathway. The colanic acid capsule may help the bacterium survive conditions outside the host. This is Co-chaperone protein DjlA from Vibrio cholerae serotype O1 (strain ATCC 39315 / El Tor Inaba N16961).